The chain runs to 570 residues: Methionine--tRNA ligase (570 aa).

The 'HIGH' region signature appears at 11–21 (PYVQTVPHLGN). The Zn(2+) site is built by Cys143, Cys146, Cys156, and Cys159. Positions 333 to 337 (KFSKS) match the 'KMSKS' region motif. Residue Lys336 coordinates ATP.

The protein belongs to the class-I aminoacyl-tRNA synthetase family. MetG type 1 subfamily. It depends on Zn(2+) as a cofactor.

Its subcellular location is the cytoplasm. It carries out the reaction tRNA(Met) + L-methionine + ATP = L-methionyl-tRNA(Met) + AMP + diphosphate. In terms of biological role, is required not only for elongation of protein synthesis but also for the initiation of all mRNA translation through initiator tRNA(fMet) aminoacylation. The polypeptide is Methionine--tRNA ligase (Pyrobaculum calidifontis (strain DSM 21063 / JCM 11548 / VA1)).